Here is a 501-residue protein sequence, read N- to C-terminus: Lysine--tRNA ligase (501 aa).

Residues glutamate 411 and glutamate 418 each contribute to the Mg(2+) site.

Belongs to the class-II aminoacyl-tRNA synthetase family. Homodimer. Requires Mg(2+) as cofactor.

It localises to the cytoplasm. The enzyme catalyses tRNA(Lys) + L-lysine + ATP = L-lysyl-tRNA(Lys) + AMP + diphosphate. The protein is Lysine--tRNA ligase of Pseudomonas aeruginosa (strain ATCC 15692 / DSM 22644 / CIP 104116 / JCM 14847 / LMG 12228 / 1C / PRS 101 / PAO1).